We begin with the raw amino-acid sequence, 172 residues long: Photosystem I assembly protein Ycf3 (172 aa).

3 TPR repeats span residues 35–68 (AFSYYRNGMSAQAEGEYAEALQNYYEAMRLEVDA), 72–105 (SYILYNIGLIHTSNGEHGRALEYYYQALERNPSL), and 120–153 (GEQAIENGQSEISQILFEKAADYWKEAIRLAPTN).

It belongs to the Ycf3 family.

The protein localises to the plastid. It is found in the chloroplast thylakoid membrane. Its function is as follows. Essential for the assembly of the photosystem I (PSI) complex. May act as a chaperone-like factor to guide the assembly of the PSI subunits. This is Photosystem I assembly protein Ycf3 from Chlamydomonas reinhardtii (Chlamydomonas smithii).